The chain runs to 245 residues: rRNA adenine N-6-methyltransferase (245 aa).

Residues N10, L12, G37, E58, D83, and S100 each coordinate S-adenosyl-L-methionine.

This sequence belongs to the class I-like SAM-binding methyltransferase superfamily. rRNA adenine N(6)-methyltransferase family.

The catalysed reaction is adenosine(2085) in 23S rRNA + 2 S-adenosyl-L-methionine = N(6)-dimethyladenosine(2085) in 23S rRNA + 2 S-adenosyl-L-homocysteine + 2 H(+). This protein produces a dimethylation of the adenine residue at position 2085 in 23S rRNA, resulting in reduced affinity between ribosomes and macrolide-lincosamide-streptogramin B antibiotics. This Clostridium perfringens protein is rRNA adenine N-6-methyltransferase (ermBP).